The sequence spans 473 residues: Envelope glycoprotein M (473 aa).

The Intravirion portion of the chain corresponds to 1–32 (MGRPAPRGSPDSAPPTKGMTGARTAWWVWCVQ). The chain crosses the membrane as a helical span at residues 33–53 (VATFVVSAVCVTGLLVLASVF). Residues 54 to 90 (RARFPCFYATASSYAGVNSTAEVRGGVAVPLRLDTQS) lie on the Virion surface side of the membrane. A helical transmembrane segment spans residues 91 to 111 (LVGTYVITAVLLLAVAVYAVV). Topologically, residues 112 to 137 (GAVTSRYDRALDAGRRLAAARMAMPH) are intravirion. The helical transmembrane segment at 138–158 (ATLIAGNVCSWLLQITVLLLA) threads the bilayer. The Virion surface portion of the chain corresponds to 159-163 (HRISQ). Residues 164 to 184 (LAHLVYVLHFACLVYFAAHFC) form a helical membrane-spanning segment. Topologically, residues 185-216 (TRGVLSGTYLRQVHGLMELAPTHHRVVGPARA) are intravirion. A helical transmembrane segment spans residues 217-237 (VLTNALLLGVFLCTADAAVSL). Over 238-250 (NTIAAFNFNFSAP) the chain is Virion surface. The chain crosses the membrane as a helical span at residues 251–271 (GMLICLTVLFAILVVSLLLVV). Over 272-280 (EGVLCHYVR) the chain is Intravirion. The helical transmembrane segment at 281–301 (VLVGPHLGAVAATGIVGLACE) threads the bilayer. Residues 302–318 (HYYTNGYYVVETQWPGA) lie on the Virion surface side of the membrane. The chain crosses the membrane as a helical span at residues 319-339 (QTGVRVALALVAAFALGMAVL). Topologically, residues 340–473 (RCTRAYLYHR…DPVYSTVRRW (134 aa)) are intravirion. Disordered regions lie at residues 371–399 (KRVR…PEYA) and 440–473 (HPRH…VRRW).

This sequence belongs to the herpesviridae glycoprotein M family. Interacts (via N-terminus) with gN (via N-terminus). The gM-gN heterodimer forms the gCII complex.

Its subcellular location is the virion membrane. The protein resides in the host Golgi apparatus. It localises to the host trans-Golgi network. The protein localises to the host endosome membrane. It is found in the host nucleus inner membrane. Functionally, envelope glycoprotein important for virion assembly and egress. Plays a role in the correct incorporation of gH-gL into virion membrane. Directs the glycoprotein N (gN) to the host trans-Golgi network. The protein is Envelope glycoprotein M of Human herpesvirus 1 (strain 17) (HHV-1).